Reading from the N-terminus, the 39-residue chain is Cytochrome b559 subunit beta (39 aa).

A helical membrane pass occupies residues 14–30 (WLAIHGLAVPTVFFLGS). Heme is bound at residue His18.

Belongs to the PsbE/PsbF family. As to quaternary structure, heterodimer of an alpha subunit and a beta subunit. PSII is composed of 1 copy each of membrane proteins PsbA, PsbB, PsbC, PsbD, PsbE, PsbF, PsbH, PsbI, PsbJ, PsbK, PsbL, PsbM, PsbT, PsbX, PsbY, PsbZ, Psb30/Ycf12, at least 3 peripheral proteins of the oxygen-evolving complex and a large number of cofactors. It forms dimeric complexes. Heme b serves as cofactor.

The protein localises to the plastid. It is found in the chloroplast thylakoid membrane. Functionally, this b-type cytochrome is tightly associated with the reaction center of photosystem II (PSII). PSII is a light-driven water:plastoquinone oxidoreductase that uses light energy to abstract electrons from H(2)O, generating O(2) and a proton gradient subsequently used for ATP formation. It consists of a core antenna complex that captures photons, and an electron transfer chain that converts photonic excitation into a charge separation. The chain is Cytochrome b559 subunit beta from Ephedra sinica (Chinese ephedra).